A 199-amino-acid polypeptide reads, in one-letter code: Outer-membrane lipoprotein LolB (199 aa).

A signal peptide spans 1–28 (MSACPAPRSPFRWLHAFTLCLLLAVLAG). Residue cysteine 29 is the site of N-palmitoyl cysteine attachment. Residue cysteine 29 is the site of S-diacylglycerol cysteine attachment.

The protein belongs to the LolB family. In terms of assembly, monomer.

It localises to the cell outer membrane. In terms of biological role, plays a critical role in the incorporation of lipoproteins in the outer membrane after they are released by the LolA protein. The protein is Outer-membrane lipoprotein LolB of Bordetella bronchiseptica (strain ATCC BAA-588 / NCTC 13252 / RB50) (Alcaligenes bronchisepticus).